Here is a 213-residue protein sequence, read N- to C-terminus: Isomeliandiol synthase MOI2 (213 aa).

The next 5 membrane-spanning stretches (helical) occupy residues 18 to 38 (AALHAWNGLSLFLIVFISWFI), 52 to 72 (VLCWWALTGLIHVFQEGYYVF), 109 to 129 (IESMASVVLGPLSLLAAYALA), 137 to 157 (ILQFGVSIAQLYGACLYFLSA), and 171 to 191 (YWAYYVGQSSIWVIVPALIAI). The EXPERA domain occupies 48 to 190 (MDRVVLCWWA…IWVIVPALIA (143 aa)).

It belongs to the EBP family. Mainly expressed in petioles.

The protein resides in the membrane. It catalyses the reaction 7,8-epoxymelianol = isomeliandiol. It participates in secondary metabolite biosynthesis; terpenoid biosynthesis. Its function is as follows. Isomerase involved in the biosynthesis of limonoids triterpene natural products such as azadirachtin, an antifeedant widely used as bioinsecticide, and possessing many medicinal applications including anti-tumoral, anti-malarial, anti-rheumatic, antibacterial, anti-inflammatory, anti-pyretic and diuretic effects. Catalyzes the conversion of 7,8-epoxymelianol to isomeliandiol via skeletal rearrangements. The protein is Isomeliandiol synthase MOI2 of Melia azedarach (Chinaberry tree).